Consider the following 261-residue polypeptide: MELKIGRAIISHALKDLDEYSDVDVAIVGAGPAGLTAARYLAEKGLKVVVYERRFSFGGGIGPGGNMLPKIVVQEEAVPILRDFKVRYKPAEDGLYTVDPAELIAKLAAGAVDAGAKIILGVHVDDVIFRGDPPRVTGLLWIWTPIQMSGMHVDPLYTQAKAVIDATGHDAEVVSVAARKVPELGIQVVGEKSAWSEVSEKLVVEHTGRVAPGLYVAGIAVCAVYGLPRMGPIFGGMLMSGKKVAEVVYKDLMAEAHAVRA.

Residues Ala33, 52 to 53 (ER), Gly60, Val124, and 152 to 154 (HVD) each bind NAD(+). Fe cation is bound by residues Asp154 and His169. NAD(+) is bound at residue Ile219. Arg229 contributes to the glycine binding site.

This sequence belongs to the THI4 family. In terms of assembly, homooctamer; tetramer of dimers. Fe(2+) is required as a cofactor.

The enzyme catalyses hydrogen sulfide + glycine + NAD(+) = ADP-5-ethyl-4-methylthiazole-2-carboxylate + nicotinamide + 3 H2O + H(+). It participates in cofactor biosynthesis; thiamine diphosphate biosynthesis. Its function is as follows. Involved in the biosynthesis of the thiazole moiety of thiamine. Catalyzes the conversion of NAD and glycine to adenosine diphosphate 5-(2-hydroxyethyl)-4-methylthiazole-2-carboxylate (ADT), an adenylated thiazole intermediate, using free sulfide as a source of sulfur. In Pyrobaculum aerophilum (strain ATCC 51768 / DSM 7523 / JCM 9630 / CIP 104966 / NBRC 100827 / IM2), this protein is Thiamine thiazole synthase.